A 355-amino-acid polypeptide reads, in one-letter code: Probable dual-specificity RNA methyltransferase RlmN (355 aa).

Glu89 functions as the Proton acceptor in the catalytic mechanism. The 228-residue stretch at 95–322 folds into the Radical SAM core domain; sequence YENRKTVCLS…KRLGVPTSIR (228 aa). An intrachain disulfide couples Cys102 to Cys333. Positions 109, 113, and 116 each coordinate [4Fe-4S] cluster. Residues 159-160, Ser191, 214-216, and Asn290 contribute to the S-adenosyl-L-methionine site; these read GE and SLH. The S-methylcysteine intermediate role is filled by Cys333.

The protein belongs to the radical SAM superfamily. RlmN family. Requires [4Fe-4S] cluster as cofactor.

It localises to the cytoplasm. The catalysed reaction is adenosine(2503) in 23S rRNA + 2 reduced [2Fe-2S]-[ferredoxin] + 2 S-adenosyl-L-methionine = 2-methyladenosine(2503) in 23S rRNA + 5'-deoxyadenosine + L-methionine + 2 oxidized [2Fe-2S]-[ferredoxin] + S-adenosyl-L-homocysteine. It catalyses the reaction adenosine(37) in tRNA + 2 reduced [2Fe-2S]-[ferredoxin] + 2 S-adenosyl-L-methionine = 2-methyladenosine(37) in tRNA + 5'-deoxyadenosine + L-methionine + 2 oxidized [2Fe-2S]-[ferredoxin] + S-adenosyl-L-homocysteine. Its function is as follows. Specifically methylates position 2 of adenine 2503 in 23S rRNA and position 2 of adenine 37 in tRNAs. The chain is Probable dual-specificity RNA methyltransferase RlmN from Thermus thermophilus (strain ATCC 27634 / DSM 579 / HB8).